The primary structure comprises 400 residues: Acetate kinase (400 aa).

N9 serves as a coordination point for Mg(2+). An ATP-binding site is contributed by K16. R90 contacts substrate. Catalysis depends on D147, which acts as the Proton donor/acceptor. ATP is bound by residues 207 to 211, 282 to 284, and 330 to 334; these read HIGNG, DLR, and GIGEN. Residue E385 participates in Mg(2+) binding.

This sequence belongs to the acetokinase family. Homodimer. Mg(2+) is required as a cofactor. Mn(2+) serves as cofactor.

Its subcellular location is the cytoplasm. It carries out the reaction acetate + ATP = acetyl phosphate + ADP. Its pathway is metabolic intermediate biosynthesis; acetyl-CoA biosynthesis; acetyl-CoA from acetate: step 1/2. Functionally, catalyzes the formation of acetyl phosphate from acetate and ATP. Can also catalyze the reverse reaction. This chain is Acetate kinase, found in Staphylococcus aureus (strain JH1).